Reading from the N-terminus, the 451-residue chain is Eukaryotic translation initiation factor 3 subunit E (451 aa).

The PCI domain occupies 256–425; it reads TDLFFSPAYI…GTVIMNHPPQ (170 aa).

Belongs to the eIF-3 subunit E family. Component of the eukaryotic translation initiation factor 3 (eIF-3) complex.

The protein localises to the cytoplasm. Its function is as follows. Component of the eukaryotic translation initiation factor 3 (eIF-3) complex, which is involved in protein synthesis of a specialized repertoire of mRNAs and, together with other initiation factors, stimulates binding of mRNA and methionyl-tRNAi to the 40S ribosome. The eIF-3 complex specifically targets and initiates translation of a subset of mRNAs involved in cell proliferation. This is Eukaryotic translation initiation factor 3 subunit E (int6) from Aspergillus fumigatus (strain CBS 144.89 / FGSC A1163 / CEA10) (Neosartorya fumigata).